We begin with the raw amino-acid sequence, 401 residues long: Leucine aminopeptidase 1 (401 aa).

The first 18 residues, 1–18, serve as a signal peptide directing secretion; it reads MKVAKASLLTILAHSVSA. A propeptide spanning residues 19-87 is cleaved from the precursor; that stretch reads RFLAEDEINR…GATRLRTKTK (69 aa). The N-linked (GlcNAc...) asparagine glycan is linked to asparagine 179. Zn(2+)-binding residues include histidine 187, aspartate 206, glutamate 245, and aspartate 272. A disulfide bridge connects residues cysteine 321 and cysteine 325. Histidine 354 contacts Zn(2+).

Belongs to the peptidase M28 family. M28E subfamily. As to quaternary structure, monomer. Requires Zn(2+) as cofactor.

It is found in the secreted. Extracellular aminopeptidase that allows assimilation of proteinaceous substrates. The protein is Leucine aminopeptidase 1 (LAP1) of Colletotrichum graminicola (strain M1.001 / M2 / FGSC 10212) (Maize anthracnose fungus).